A 207-amino-acid chain; its full sequence is Killer cell lectin-like receptor subfamily F member 2 (207 aa).

At 1-30 (MENEDGYMTLSFKNRCKSKQKSKDFSLYPQ) the chain is on the cytoplasmic side. Position 7 is a phosphotyrosine (Tyr-7). A helical; Signal-anchor for type II membrane protein transmembrane segment spans residues 31-51 (YYCLLLIFGCIVILIFIMTGI). Topologically, residues 52–207 (DLKFWHKKMD…ILTHNGTSGV (156 aa)) are extracellular. Asn-67 carries N-linked (GlcNAc...) asparagine glycosylation. 3 disulfide bridges follow: Cys-78–Cys-89, Cys-106–Cys-193, and Cys-172–Cys-185. The C-type lectin domain occupies 85–194 (NEGKCYWFST…CSSTFKGICQ (110 aa)). The N-linked (GlcNAc...) asparagine glycan is linked to Asn-202.

Homodimer; non-disulfide-linked. Interacts with CLEC2A. Post-translationally, N-glycosylated.

The protein localises to the cell membrane. Its function is as follows. C-type lectin-like receptor involved in natural killer cell mediated cytotoxicity and cytokine secretion in keratinocytes via its interaction with CLEC2A. Triggers degranulation in a SYK-dependent manner and stimulates SYK phosphotyrosinylation without recruiting SYK directly. This is Killer cell lectin-like receptor subfamily F member 2 (KLRF2) from Homo sapiens (Human).